A 456-amino-acid chain; its full sequence is Bifunctional protein GlmU (456 aa).

Residues 1 to 229 (MYKCALILAA…FEEILGVNSR (229 aa)) are pyrophosphorylase. UDP-N-acetyl-alpha-D-glucosamine is bound by residues 8–11 (LAAG), Lys-22, Gln-73, and 78–79 (GT). Asp-103 provides a ligand contact to Mg(2+). Gly-140, Glu-155, Asn-170, and Asn-227 together coordinate UDP-N-acetyl-alpha-D-glucosamine. Residue Asn-227 participates in Mg(2+) binding. Residues 230 to 250 (LQLCQVGKVMQKRINEKHMEN) form a linker region. The segment at 251 to 456 (GSTLIDPDNT…GWVDKKGLLK (206 aa)) is N-acetyltransferase. Arg-332 and Lys-350 together coordinate UDP-N-acetyl-alpha-D-glucosamine. His-362 functions as the Proton acceptor in the catalytic mechanism. UDP-N-acetyl-alpha-D-glucosamine is bound by residues Tyr-365 and Asn-376. Acetyl-CoA contacts are provided by residues 385–386 (NY), Ala-422, and Arg-439.

In the N-terminal section; belongs to the N-acetylglucosamine-1-phosphate uridyltransferase family. It in the C-terminal section; belongs to the transferase hexapeptide repeat family. As to quaternary structure, homotrimer. The cofactor is Mg(2+).

It is found in the cytoplasm. It catalyses the reaction alpha-D-glucosamine 1-phosphate + acetyl-CoA = N-acetyl-alpha-D-glucosamine 1-phosphate + CoA + H(+). It carries out the reaction N-acetyl-alpha-D-glucosamine 1-phosphate + UTP + H(+) = UDP-N-acetyl-alpha-D-glucosamine + diphosphate. It participates in nucleotide-sugar biosynthesis; UDP-N-acetyl-alpha-D-glucosamine biosynthesis; N-acetyl-alpha-D-glucosamine 1-phosphate from alpha-D-glucosamine 6-phosphate (route II): step 2/2. The protein operates within nucleotide-sugar biosynthesis; UDP-N-acetyl-alpha-D-glucosamine biosynthesis; UDP-N-acetyl-alpha-D-glucosamine from N-acetyl-alpha-D-glucosamine 1-phosphate: step 1/1. Its pathway is bacterial outer membrane biogenesis; LPS lipid A biosynthesis. Functionally, catalyzes the last two sequential reactions in the de novo biosynthetic pathway for UDP-N-acetylglucosamine (UDP-GlcNAc). The C-terminal domain catalyzes the transfer of acetyl group from acetyl coenzyme A to glucosamine-1-phosphate (GlcN-1-P) to produce N-acetylglucosamine-1-phosphate (GlcNAc-1-P), which is converted into UDP-GlcNAc by the transfer of uridine 5-monophosphate (from uridine 5-triphosphate), a reaction catalyzed by the N-terminal domain. This chain is Bifunctional protein GlmU, found in Clostridium acetobutylicum (strain ATCC 824 / DSM 792 / JCM 1419 / IAM 19013 / LMG 5710 / NBRC 13948 / NRRL B-527 / VKM B-1787 / 2291 / W).